Consider the following 424-residue polypeptide: UPF0053 protein MG146 homolog (424 aa).

The 186-residue stretch at 6-191 (SGGLLALIII…EQNGLFTKED (186 aa)) folds into the CNNM transmembrane domain. The next 4 membrane-spanning stretches (helical) occupy residues 7–27 (GGLLALIIISIILLACISAVV), 71–91 (LITILVANNIVAILVSNILFL), 101–121 (AISSALNLLISGVLLLMLCEI), and 135–155 (LVYFAVVVYFFYILFWPITKL). CBS domains lie at 210–270 (MIKW…NEPF) and 275–335 (LLYP…EHDE).

It belongs to the UPF0053 family.

The protein localises to the cell membrane. The chain is UPF0053 protein MG146 homolog from Mycoplasma pneumoniae (strain ATCC 29342 / M129 / Subtype 1) (Mycoplasmoides pneumoniae).